The chain runs to 305 residues: Delta-9 acyl-lipid desaturase 1 (305 aa).

The tract at residues 1-20 (MSLSASEKEENNKKMAADKA) is disordered. 2 helical membrane-spanning segments follow: residues 39–59 (IVKA…PFNF) and 60–80 (TWPA…GITV). Residues His83, His88, His120, His123, and His124 each contribute to the Fe cation site. The Histidine box-1 signature appears at 83–88 (HRNLAH). Positions 120-124 (HRYHH) match the Histidine box-2 motif. A helical transmembrane segment spans residues 180–200 (VLYHILTFGFLLYYFGGLSFL). Fe cation-binding residues include His223, His252, His255, and His256. The Histidine box-3 signature appears at 252–256 (HNNHH). The chain crosses the membrane as a helical span at residues 268–288 (WWQIDISWYIVRFLEIIGLAT).

The protein belongs to the fatty acid desaturase type 1 family. The cofactor is Fe cation. In terms of tissue distribution, strongly expressed in inflorescence meristems, leaves, and flowers, and weakly in roots and seedpods.

The protein resides in the endoplasmic reticulum membrane. It is found in the plastid. It localises to the chloroplast membrane. It participates in lipid metabolism; polyunsaturated fatty acid biosynthesis. In terms of biological role, involved in delta-9 desaturation of fatty acids. Involved in the production of very-long-chain fatty acids (VLCFAs). May desaturate chloroplastic monogalactosyl diacylglycerol (MGDG) and alter chloroplast membrane fluidity, which is required to prime a cold acclimation response. The chain is Delta-9 acyl-lipid desaturase 1 from Arabidopsis thaliana (Mouse-ear cress).